We begin with the raw amino-acid sequence, 284 residues long: L-ribulose-5-phosphate 3-epimerase UlaE (284 aa).

This sequence belongs to the L-ribulose-5-phosphate 3-epimerase family.

The enzyme catalyses L-ribulose 5-phosphate = L-xylulose 5-phosphate. It functions in the pathway cofactor degradation; L-ascorbate degradation; D-xylulose 5-phosphate from L-ascorbate: step 3/4. Functionally, catalyzes the isomerization of L-xylulose-5-phosphate to L-ribulose-5-phosphate. Is involved in the anaerobic L-ascorbate utilization. The polypeptide is L-ribulose-5-phosphate 3-epimerase UlaE (Escherichia coli O139:H28 (strain E24377A / ETEC)).